The primary structure comprises 138 residues: Holo-[acyl-carrier-protein] synthase (138 aa).

The Mg(2+) site is built by D8 and E56.

This sequence belongs to the P-Pant transferase superfamily. AcpS family. Requires Mg(2+) as cofactor.

It is found in the cytoplasm. The enzyme catalyses apo-[ACP] + CoA = holo-[ACP] + adenosine 3',5'-bisphosphate + H(+). Its function is as follows. Transfers the 4'-phosphopantetheine moiety from coenzyme A to a Ser of acyl-carrier-protein. This is Holo-[acyl-carrier-protein] synthase from Thermoanaerobacter pseudethanolicus (strain ATCC 33223 / 39E) (Clostridium thermohydrosulfuricum).